The primary structure comprises 114 residues: Putative neurotoxin 7 (114 aa).

Belongs to the scolopendra neurotoxin 8 family. Post-translationally, contains 3 disulfide bonds. Expressed by the venom gland.

Its subcellular location is the secreted. The chain is Putative neurotoxin 7 from Scolopendra mutilans (Chinese red-headed centipede).